A 334-amino-acid polypeptide reads, in one-letter code: uncharacterized protein (334 aa).

Belongs to the MG414/MG415 family.

This is an uncharacterized protein from Mycoplasma pneumoniae (strain ATCC 29342 / M129 / Subtype 1) (Mycoplasmoides pneumoniae).